A 263-amino-acid polypeptide reads, in one-letter code: Ribosomal RNA small subunit methyltransferase J (263 aa).

S-adenosyl-L-methionine contacts are provided by residues 108-109, 124-125, and Asp178; these read RD and ER.

This sequence belongs to the methyltransferase superfamily. RsmJ family.

Its subcellular location is the cytoplasm. The enzyme catalyses guanosine(1516) in 16S rRNA + S-adenosyl-L-methionine = N(2)-methylguanosine(1516) in 16S rRNA + S-adenosyl-L-homocysteine + H(+). Specifically methylates the guanosine in position 1516 of 16S rRNA. This is Ribosomal RNA small subunit methyltransferase J from Idiomarina loihiensis (strain ATCC BAA-735 / DSM 15497 / L2-TR).